Consider the following 334-residue polypeptide: G-protein coupled receptor 12 (334 aa).

Residues 1–48 are Extracellular-facing; sequence MNEDPKVNLSGLPRDCIDAGAPENISAAVPSQGSVAESEPELVVNPWD. 2 N-linked (GlcNAc...) asparagine glycosylation sites follow: N8 and N24. A helical transmembrane segment spans residues 49-69; sequence IVLCSSGTLICCENAVVVLII. The Cytoplasmic portion of the chain corresponds to 70–78; sequence FHSPSLRAP. A helical transmembrane segment spans residues 79–99; sequence MFLLIGSLALADLLAGLGLII. Over 100–113 the chain is Extracellular; sequence NFVFAYLLQSEATK. The helical transmembrane segment at 114 to 134 threads the bilayer; sequence LVTIGLIVASFSASVCSLLAI. Topologically, residues 135–158 are cytoplasmic; the sequence is TVDRYLSLYYALTYHSERTVTFTY. Residues 159-179 form a helical membrane-spanning segment; it reads VMLVMLWGTSICLGLLPVMGW. Over 180 to 199 the chain is Extracellular; that stretch reads NCLRDESTCSVVRPLTKNNA. Residues 200-220 form a helical membrane-spanning segment; that stretch reads AILSISFLFMFALMLQLYIQI. At 221–252 the chain is on the cytoplasmic side; that stretch reads CKIVMRHAHQIALQHHFLATSHYVTTRKGVST. Residues 253 to 273 form a helical membrane-spanning segment; sequence LALILGTFAACWMPFTLYSLI. Over 274–282 the chain is Extracellular; that stretch reads ADYTYPSIY. Residues 283 to 303 traverse the membrane as a helical segment; that stretch reads TYATLLPATYNSIINPVIYAF. The Cytoplasmic portion of the chain corresponds to 304-334; sequence RNQEIQKALCLICCGCIPSSLSQRARSPSDV. The S-palmitoyl cysteine moiety is linked to residue C317. Phosphoserine is present on residues S330 and S332.

The protein belongs to the G-protein coupled receptor 1 family. Expressed predominantly in the forebrain and a lesser extent in the hindbrain. Lower expression in the liver.

It localises to the cell membrane. Receptor with constitutive G(s) signaling activity that stimulates cyclic AMP production. Promotes neurite outgrowth and blocks myelin inhibition in neurons. In Mus musculus (Mouse), this protein is G-protein coupled receptor 12 (Gpr12).